The following is a 2410-amino-acid chain: Cell wall alpha-1,3-glucan synthase ags1 (2410 aa).

Serine 1643, serine 1644, and serine 1651 each carry phosphoserine. The residue at position 1653 (threonine 1653) is a Phosphothreonine. Residues 1685–1706 (SLSLGSRRGPGHTTEDDASDGL) are disordered. Serine 1738 and serine 1812 each carry phosphoserine. Residues 1796–1827 (QDDLSDPARSVDSDSVSPPLPPFVAGSNPNAR) form a disordered region. The segment covering 1802–1827 (PARSVDSDSVSPPLPPFVAGSNPNAR) has biased composition (low complexity).

The protein belongs to the glycosyltransferase group 1 family. Interacts with sad1.

The catalysed reaction is [(1-&gt;3)-alpha-D-glucosyl](n) + UDP-alpha-D-glucose = [(1-&gt;3)-alpha-D-glucosyl](n+1) + UDP + H(+). Required for alpha-1,3-glucan and alpha-1,4-glucan production which are required for cell wall synthesis. This chain is Cell wall alpha-1,3-glucan synthase ags1 (ags1), found in Schizosaccharomyces pombe (strain 972 / ATCC 24843) (Fission yeast).